The chain runs to 513 residues: Glutamyl-tRNA(Gln) amidotransferase subunit A (513 aa).

Residues Lys-85 and Ser-160 each act as charge relay system in the active site. Ser-184 acts as the Acyl-ester intermediate in catalysis.

Belongs to the amidase family. GatA subfamily. In terms of assembly, heterotrimer of A, B and C subunits.

It catalyses the reaction L-glutamyl-tRNA(Gln) + L-glutamine + ATP + H2O = L-glutaminyl-tRNA(Gln) + L-glutamate + ADP + phosphate + H(+). Its function is as follows. Allows the formation of correctly charged Gln-tRNA(Gln) through the transamidation of misacylated Glu-tRNA(Gln) in organisms which lack glutaminyl-tRNA synthetase. The reaction takes place in the presence of glutamine and ATP through an activated gamma-phospho-Glu-tRNA(Gln). The chain is Glutamyl-tRNA(Gln) amidotransferase subunit A from Bifidobacterium longum subsp. infantis (strain ATCC 15697 / DSM 20088 / JCM 1222 / NCTC 11817 / S12).